We begin with the raw amino-acid sequence, 430 residues long: Small ribosomal subunit protein uS5m (430 aa).

The segment at 108–128 (AGARKGRGKRTKRKRRKDLNR) is disordered. The segment covering 111–125 (RKGRGKRTKRKRRKD) has biased composition (basic residues). Residues 218-282 (FDTRILEVRN…NRAVHYLHYI (65 aa)) enclose the S5 DRBM domain.

Belongs to the universal ribosomal protein uS5 family. Component of the mitochondrial ribosome small subunit (28S) which comprises a 12S rRNA and about 30 distinct proteins.

The protein localises to the mitochondrion. This chain is Small ribosomal subunit protein uS5m (MRPS5), found in Bos taurus (Bovine).